We begin with the raw amino-acid sequence, 261 residues long: Mlc titration factor A (261 aa).

Residues histidine 111, histidine 148, histidine 152, and glutamate 211 each coordinate Zn(2+).

The protein belongs to the MtfA family. Interacts with Mlc. The cofactor is Zn(2+).

It is found in the cytoplasm. Functionally, involved in the modulation of the activity of the glucose-phosphotransferase system (glucose-PTS). Interacts with the transcriptional repressor Mlc, preventing its interaction with DNA and leading to the modulation of expression of genes regulated by Mlc, including ptsG, which encodes the PTS system glucose-specific EIICB component. In terms of biological role, shows zinc-dependent metallopeptidase activity. The chain is Mlc titration factor A from Edwardsiella ictaluri (strain 93-146).